Here is a 492-residue protein sequence, read N- to C-terminus: Aspartate aminotransferase (492 aa).

The transit peptide at 1-66 directs the protein to the chloroplast; that stretch reads MMSASFKCPV…KGSCCLFNIR (66 aa). Residues Gly-119, Trp-206, and Asn-256 each contribute to the L-aspartate site. Lys-319 is modified (N6-(pyridoxal phosphate)lysine). Arg-458 is an L-aspartate binding site.

Belongs to the class-I pyridoxal-phosphate-dependent aminotransferase family. Homodimer. The cofactor is pyridoxal 5'-phosphate.

It localises to the plastid. Its subcellular location is the chloroplast. The enzyme catalyses L-aspartate + 2-oxoglutarate = oxaloacetate + L-glutamate. In terms of biological role, prokaryotic-type aspartate aminotransferase. Specific for aspartate and no activity with glutamine, asparagine, alanine, histidine, leucine, methionine, lysine, arginine, tryptophan, tyrosine, phenylalanine or kynurenine. This Pinus pinaster (Maritime pine) protein is Aspartate aminotransferase (AAT).